The sequence spans 359 residues: DNA polymerase IV (359 aa).

A UmuC domain is found at 4–184; it reads IVHVDMDAFY…LKVNRIPGVG (181 aa). Residues aspartate 8 and aspartate 102 each contribute to the Mg(2+) site. Glutamate 103 is an active-site residue.

It belongs to the DNA polymerase type-Y family. In terms of assembly, monomer. Mg(2+) serves as cofactor.

Its subcellular location is the cytoplasm. It catalyses the reaction DNA(n) + a 2'-deoxyribonucleoside 5'-triphosphate = DNA(n+1) + diphosphate. Its function is as follows. Poorly processive, error-prone DNA polymerase involved in untargeted mutagenesis. Copies undamaged DNA at stalled replication forks, which arise in vivo from mismatched or misaligned primer ends. These misaligned primers can be extended by PolIV. Exhibits no 3'-5' exonuclease (proofreading) activity. May be involved in translesional synthesis, in conjunction with the beta clamp from PolIII. The polypeptide is DNA polymerase IV (Xanthomonas oryzae pv. oryzae (strain MAFF 311018)).